The sequence spans 652 residues: Translation factor guf1, mitochondrial (652 aa).

A mitochondrion-targeting transit peptide spans 1–44 (MSIFRLSRTFSLETCLKSSSFKIRWRFFSVSYASRKLASEDNKP). In terms of domain architecture, tr-type G spans 56–237 (NRVRNWAVIA…EIIQKIPPPK (182 aa)). Residues 65 to 72 (AHIDHGKS), 130 to 134 (DTPGH), and 184 to 187 (NKVD) contribute to the GTP site.

It belongs to the TRAFAC class translation factor GTPase superfamily. Classic translation factor GTPase family. LepA subfamily.

It localises to the mitochondrion inner membrane. It carries out the reaction GTP + H2O = GDP + phosphate + H(+). Its function is as follows. Promotes mitochondrial protein synthesis. May act as a fidelity factor of the translation reaction, by catalyzing a one-codon backward translocation of tRNAs on improperly translocated ribosomes. Binds to mitochondrial ribosomes in a GTP-dependent manner. This Schizosaccharomyces pombe (strain 972 / ATCC 24843) (Fission yeast) protein is Translation factor guf1, mitochondrial (guf1).